The primary structure comprises 251 residues: Phosphate import ATP-binding protein PstB (251 aa).

Positions Ile5–Ile246 constitute an ABC transporter domain. Gly37 to Ser44 contributes to the ATP binding site.

Belongs to the ABC transporter superfamily. Phosphate importer (TC 3.A.1.7) family. In terms of assembly, the complex is composed of two ATP-binding proteins (PstB), two transmembrane proteins (PstC and PstA) and a solute-binding protein (PstS).

It localises to the cell membrane. The enzyme catalyses phosphate(out) + ATP + H2O = ADP + 2 phosphate(in) + H(+). Functionally, part of the ABC transporter complex PstSACB involved in phosphate import. Responsible for energy coupling to the transport system. The sequence is that of Phosphate import ATP-binding protein PstB from Dehalococcoides mccartyi (strain CBDB1).